A 487-amino-acid chain; its full sequence is Proline--tRNA ligase (487 aa).

This sequence belongs to the class-II aminoacyl-tRNA synthetase family. ProS type 3 subfamily. As to quaternary structure, homodimer.

It localises to the cytoplasm. It carries out the reaction tRNA(Pro) + L-proline + ATP = L-prolyl-tRNA(Pro) + AMP + diphosphate. In terms of biological role, catalyzes the attachment of proline to tRNA(Pro) in a two-step reaction: proline is first activated by ATP to form Pro-AMP and then transferred to the acceptor end of tRNA(Pro). The sequence is that of Proline--tRNA ligase from Pyrobaculum neutrophilum (strain DSM 2338 / JCM 9278 / NBRC 100436 / V24Sta) (Thermoproteus neutrophilus).